The following is a 241-amino-acid chain: Beta-nerve growth factor (241 aa).

Residues 1-18 form the signal peptide; that stretch reads MSMLFYTLITAFLIGIQA. The propeptide occupies 19–121; that stretch reads EPHSESNVPA…PFNRTHRSKR (103 aa). Residues asparagine 69 and asparagine 114 are each glycosylated (N-linked (GlcNAc...) asparagine). Cystine bridges form between cysteine 136/cysteine 201, cysteine 179/cysteine 229, and cysteine 189/cysteine 231. Tyrosine 173 and lysine 209 together coordinate a 1-acyl-sn-glycero-3-phospho-(1D-myo-inositol). Position 209 (lysine 209) interacts with a 1-acyl-sn-glycero-3-phospho-L-serine.

Belongs to the NGF-beta family. As to quaternary structure, homodimer. The homodimer interacts with a single NTRK1 chain. The homodimer interacts with a single NGFR chain. The NGF dimer interacts with a single SORCS2 chain (via extracellular domain). The NGF precursor (proNGF) binds to a receptor complex formed by SORT1 and NGFR, which leads to NGF endocytosis. Both mature NGF and the immature NGF precursor (proNGF) interact with SORCS2 and with the heterodimer formed by SORCS2 and NGFR (via extracellular domains). The NGF precursor (proNGF) has much higher affinity for SORCS2 than mature NGF. The NGF precursor (proNGF) has much higher affinity for SORT1 than mature NGF. Interacts with ADAM10 in a divalent cation-dependent manner. Interaction with SORCS3.

It localises to the secreted. The protein resides in the endosome lumen. Nerve growth factor is important for the development and maintenance of the sympathetic and sensory nervous systems. Extracellular ligand for the NTRK1 and NGFR receptors, activates cellular signaling cascades to regulate neuronal proliferation, differentiation and survival. The immature NGF precursor (proNGF) functions as a ligand for the heterodimeric receptor formed by SORCS2 and NGFR, and activates cellular signaling cascades that lead to inactivation of RAC1 and/or RAC2, reorganization of the actin cytoskeleton and neuronal growth cone collapse. In contrast to mature NGF, the precursor form (proNGF) promotes neuronal apoptosis (in vitro). Inhibits metalloproteinase-dependent proteolysis of platelet glycoprotein VI. Binds lysophosphatidylinositol and lysophosphatidylserine between the two chains of the homodimer. The lipid-bound form promotes histamine relase from mast cells, contrary to the lipid-free form. In Homo sapiens (Human), this protein is Beta-nerve growth factor (NGF).